Here is a 299-residue protein sequence, read N- to C-terminus: Glycerol-3-phosphate dehydrogenase [NAD(P)+] (299 aa).

Residues Trp-11, Arg-30, His-31, and Lys-79 each coordinate NADPH. Positions 79, 107, and 109 each coordinate sn-glycerol 3-phosphate. Ala-111 serves as a coordination point for NADPH. The sn-glycerol 3-phosphate site is built by Lys-161, Asp-214, Ser-224, Arg-225, and Asn-226. Catalysis depends on Lys-161, which acts as the Proton acceptor. NADPH is bound at residue Arg-225. Val-249 and Glu-251 together coordinate NADPH.

The protein belongs to the NAD-dependent glycerol-3-phosphate dehydrogenase family.

It is found in the cytoplasm. The enzyme catalyses sn-glycerol 3-phosphate + NAD(+) = dihydroxyacetone phosphate + NADH + H(+). The catalysed reaction is sn-glycerol 3-phosphate + NADP(+) = dihydroxyacetone phosphate + NADPH + H(+). It functions in the pathway membrane lipid metabolism; glycerophospholipid metabolism. Catalyzes the reduction of the glycolytic intermediate dihydroxyacetone phosphate (DHAP) to sn-glycerol 3-phosphate (G3P), the key precursor for phospholipid synthesis. This is Glycerol-3-phosphate dehydrogenase [NAD(P)+] from Nitratiruptor sp. (strain SB155-2).